A 201-amino-acid polypeptide reads, in one-letter code: Small ribosomal subunit protein uS4c (201 aa).

A disordered region spans residues 16–37 (GALPGLTSKRPRSGSDLRNQSR). The region spanning 89–152 (MRLDNTLFRL…RSRTLIQNHI (64 aa)) is the S4 RNA-binding domain.

Belongs to the universal ribosomal protein uS4 family. In terms of assembly, part of the 30S ribosomal subunit. Contacts protein S5. The interaction surface between S4 and S5 is involved in control of translational fidelity.

The protein localises to the plastid. It is found in the chloroplast. One of the primary rRNA binding proteins, it binds directly to 16S rRNA where it nucleates assembly of the body of the 30S subunit. Functionally, with S5 and S12 plays an important role in translational accuracy. The chain is Small ribosomal subunit protein uS4c (rps4) from Chloranthus spicatus (Chulantree).